The following is a 107-amino-acid chain: Quaternary ammonium compound-resistance protein QacC (107 aa).

The next 3 helical transmembrane spans lie at 26–46 (FSKFIPSLGTIISFGICFYFL), 57–77 (ITYATWAGLGLVLTTVVSIII), and 84–104 (LITIVSIVLIIVGVVSLNIFG).

This sequence belongs to the drug/metabolite transporter (DMT) superfamily. Small multidrug resistance (SMR) (TC 2.A.7.1) family.

It localises to the cell membrane. Multidrug exporter. Is implicated for the resistance to bacteriocidal quaternary ammonium compounds. The protein is Quaternary ammonium compound-resistance protein QacC of Staphylococcus sp. (strain ST827).